The chain runs to 328 residues: Carbonic anhydrase-related protein 11 (328 aa).

A signal peptide spans 1–23 (MGGAARLSAPQALVLWAALGAAA). One can recognise an Alpha-carbonic anhydrase domain in the interval 33–303 (DWWSYKENLQ…LAHRALRGNR (271 aa)). A glycan (N-linked (GlcNAc...) asparagine) is linked at Asn-118. Positions 300-328 (RGNRDPRHPERRCRGPNYRLHVDGGPHGR) are disordered. Over residues 319–328 (LHVDGGPHGR) the composition is skewed to basic and acidic residues.

Belongs to the alpha-carbonic anhydrase family.

It localises to the secreted. In terms of biological role, does not have a catalytic activity. In Mus musculus (Mouse), this protein is Carbonic anhydrase-related protein 11 (Ca11).